The sequence spans 471 residues: UDP-glycosyltransferase CGT (471 aa).

His-24 functions as the Proton acceptor in the catalytic mechanism. His-24 provides a ligand contact to an anthocyanidin. The active-site Charge relay is Asp-120. Thr-143 lines the UDP-alpha-D-glucose pocket. The tract at residues 280–281 (SR) is UDP. UDP-alpha-D-glucose contacts are provided by Val-343, Gln-345, His-360, Trp-363, Asn-364, Ser-365, and Glu-368. An an anthocyanidin-binding site is contributed by Gly-383. Residues Asp-384 and Gln-385 each contribute to the UDP-alpha-D-glucose site.

It belongs to the UDP-glycosyltransferase family.

It catalyses the reaction a 3'-hydro-2'-hydroxy-beta-oxodihydrochalcone + UDP-alpha-D-glucose = a 3'-(beta-D-glucopyranosyl)-2'-hydroxy-beta-oxodihydrochalcone + UDP + H(+). Functionally, UDP-glucose-dependent glucosyltransferase catalyzing the c-glucosylation of 2-hydroxyflavanones. This is UDP-glycosyltransferase CGT from Oryza sativa subsp. japonica (Rice).